Here is a 272-residue protein sequence, read N- to C-terminus: Putative protein-disulfide oxidoreductase RP025 (272 aa).

The first 21 residues, 1-21 (MRNIFIVLIFLFLSNCSEVKA), serve as a signal peptide directing secretion. The region spanning 74–263 (DSREQKKPEI…ISKAVDKALD (190 aa)) is the Thioredoxin domain. C116 and C119 are oxidised to a cystine.

This sequence belongs to the thioredoxin family. DsbA subfamily.

It is found in the periplasm. Functionally, may be required for disulfide bond formation in some proteins. This Rickettsia prowazekii (strain Madrid E) protein is Putative protein-disulfide oxidoreductase RP025.